We begin with the raw amino-acid sequence, 229 residues long: Large ribosomal subunit protein uL1 (229 aa).

Belongs to the universal ribosomal protein uL1 family. In terms of assembly, part of the 50S ribosomal subunit.

In terms of biological role, binds directly to 23S rRNA. The L1 stalk is quite mobile in the ribosome, and is involved in E site tRNA release. Its function is as follows. Protein L1 is also a translational repressor protein, it controls the translation of the L11 operon by binding to its mRNA. The chain is Large ribosomal subunit protein uL1 from Rhodopseudomonas palustris (strain TIE-1).